Here is an 826-residue protein sequence, read N- to C-terminus: MSKNRDRVALPPVNAQKTNMTCHFCIVGCGYHVYKWDENKEGGRAANQNALGLDFTKQLPPFATTLTPAMTNVITAKNGKRSNIMIIPDKECVVNQGLSSTRGGKMAGYMYAADGMTADRLKYPRFYAGDQWLDTSWDHAMAIYAGLTKKILDQGNVRDIMFATFDHGGAGGGFENTWGSGKLMFSAIQTPTVRIHNRPAYNSECHATREMGIGELNNSYEDAQVADVIWSIGNNPYETQTNYFLNHWLPNLNGSTEEKKKQWFAGEPVGPGLMIFVDPRRTTSIAIAEQTAKDRVLHLDINPGTDVALFNGLLTYVVQQGWIAKEFIAQHTVGFEDAVKTNQMSLADCSRITGVSEDKLRQAAEWSYKPKAAGKMPRTMHAYEKGIIWGNDNYNIQSSLLDLVIATQNVGRRGTGCVRMGGHQEGYVRPPHPTGEKIYVDQEIIQGKGRMMTWWGCNNFQTSNNAQALREVSLRRSQIVKDAMSKARGASAAEMVDIIYDATSKGGLFVTSINLYPTKLSEAAHLMLPAAHPGEMNLTSMNGERRMRLSEKFMDAPGDALPDCLIAAKAANTLKAMYEAEGKPEMVKRFSGFDWKTEEDAFNDGFRSAGQPGAEPIDSQGGSTGVLATYTLLRAAGTNGVQLPIKRVENGKMIGTAIHYDDNKFDTKDGKAHFKPAPWNGLPKPVEEQKAKHKFWLNNGRANEVWQSAYHDQYNDFVKSRYPLAYIELNPGDAQSLGVAAGDVVEVFNDYGSTFAMAYPVKDMKPSHTFMLFGYVNGIQGDVTTDWVDRNIIPYYKGTWGSVRRIGSIEQYKKTVSTKRRAFDNV.

The [3Fe-4S] cluster site is built by C22, C25, and C29. The substrate site is built by H196, E204, R419, and H423.

It belongs to the prokaryotic molybdopterin-containing oxidoreductase family. As to quaternary structure, heterodimer consisting of a large and a small subunit. Requires [3Fe-4S] cluster as cofactor. Mo-bis(molybdopterin guanine dinucleotide) is required as a cofactor.

It catalyses the reaction 2 oxidized [azurin] + arsenite + H2O = 2 reduced [azurin] + arsenate + 3 H(+). Functionally, involved in the detoxification of arsenic. Oxidizes As(III)O3(3-) (arsenite) to the somewhat less toxic As(V)O4(3-) (arsenate). The sequence is that of Arsenite oxidase subunit AioA (aioA) from Herminiimonas arsenicoxydans.